The following is a 364-amino-acid chain: MKRTPLFEKHVELGAKMVDFAGWEMPLYYTSIFEEVMAVRKSVGMFDVSHMGEFLVKGPEAVSFIDFLITNNFSSLPDGKALYSVMCNENGGIIDDLVVYKVSPDEALMVVNAANIEKDFNWIKSHSKNFNVEVSNISDTTALIAFQGPRAQEALQELVEDSLEEIAYYSFKKSIVAGVEAIVSRTGYTGEDGFELMIEAKNSPKVWDALMNLLRKIDGRPAGLGARDVCRLEATYLLYGQDMDENTNPFEVGLSWVVKLDKDFVGKEALLKAKEKVERKLVALELSGKRIARKGYEVSKNGERVGEITSGNFSPTLGKSIALALVSKSVKIGDQLGVVFPGGKLVEALVVKKPFYRGSVRREV.

It belongs to the GcvT family. In terms of assembly, the glycine cleavage system is composed of four proteins: P, T, L and H.

It carries out the reaction N(6)-[(R)-S(8)-aminomethyldihydrolipoyl]-L-lysyl-[protein] + (6S)-5,6,7,8-tetrahydrofolate = N(6)-[(R)-dihydrolipoyl]-L-lysyl-[protein] + (6R)-5,10-methylene-5,6,7,8-tetrahydrofolate + NH4(+). Its function is as follows. The glycine cleavage system catalyzes the degradation of glycine. This is Aminomethyltransferase from Thermotoga sp. (strain RQ2).